Consider the following 545-residue polypeptide: Glucans biosynthesis protein G (545 aa).

The first 34 residues, 1–34 (MVSLLRCQSFKPSSSLICSLALSAAFALSSSAFA), serve as a signal peptide directing secretion. Residues 38 to 60 (KPAENKPATPVVSPPKATAQPAN) form a disordered region.

It belongs to the OpgD/OpgG family.

It is found in the periplasm. Its pathway is glycan metabolism; osmoregulated periplasmic glucan (OPG) biosynthesis. Functionally, involved in the biosynthesis of osmoregulated periplasmic glucans (OPGs). The sequence is that of Glucans biosynthesis protein G from Shewanella sp. (strain MR-7).